Consider the following 233-residue polypeptide: Hydroxyacylglutathione hydrolase (233 aa).

The Zn(2+) site is built by His52, His54, Asp56, His57, His108, Asp125, and His163.

It belongs to the metallo-beta-lactamase superfamily. Glyoxalase II family. Monomer. Zn(2+) serves as cofactor.

It carries out the reaction an S-(2-hydroxyacyl)glutathione + H2O = a 2-hydroxy carboxylate + glutathione + H(+). It participates in secondary metabolite metabolism; methylglyoxal degradation; (R)-lactate from methylglyoxal: step 2/2. Thiolesterase that catalyzes the hydrolysis of S-D-lactoyl-glutathione to form glutathione and D-lactic acid. This is Hydroxyacylglutathione hydrolase from Histophilus somni (strain 129Pt) (Haemophilus somnus).